A 418-amino-acid chain; its full sequence is Transcription termination factor Rho (418 aa).

The region spanning 48–123 (DIYGDGVLEI…LKVNDINFDR (76 aa)) is the Rho RNA-BD domain. Residues 169 to 174 (GKGQRG), 181 to 186 (KAGKTM), and R212 contribute to the ATP site.

This sequence belongs to the Rho family. In terms of assembly, homohexamer. The homohexamer assembles into an open ring structure.

Facilitates transcription termination by a mechanism that involves Rho binding to the nascent RNA, activation of Rho's RNA-dependent ATPase activity, and release of the mRNA from the DNA template. This chain is Transcription termination factor Rho, found in Allochromatium vinosum (strain ATCC 17899 / DSM 180 / NBRC 103801 / NCIMB 10441 / D) (Chromatium vinosum).